The primary structure comprises 347 residues: uncharacterized protein (347 aa).

The segment at 5-44 adopts an RING-type zinc-finger fold; that stretch reads CTICHNTPNRPVRLDCNHEFCYICIKGSIQNDMLNCAVCR. Positions 244-321 constitute a WWE domain; sequence NVQANFNVAR…NLDAWRQIKR (78 aa).

This is an uncharacterized protein from Caenorhabditis elegans.